The following is a 254-amino-acid chain: Ribonuclease 3 (254 aa).

The RNase III domain maps to L24–G154. E67 provides a ligand contact to Mg(2+). Residue D71 is part of the active site. The Mg(2+) site is built by D140 and E143. Residue E143 is part of the active site. The DRBM domain maps to D181–G250.

This sequence belongs to the ribonuclease III family. Homodimer. The cofactor is Mg(2+).

The protein localises to the cytoplasm. It carries out the reaction Endonucleolytic cleavage to 5'-phosphomonoester.. Its function is as follows. Digests double-stranded RNA. Involved in the processing of primary rRNA transcript to yield the immediate precursors to the large and small rRNAs (23S and 16S). Processes some mRNAs, and tRNAs when they are encoded in the rRNA operon. Processes pre-crRNA and tracrRNA of type II CRISPR loci if present in the organism. The protein is Ribonuclease 3 of Treponema pallidum (strain Nichols).